The sequence spans 238 residues: Uridylate kinase (238 aa).

12 to 15 contacts ATP; it reads KLSG. Residue Gly-54 participates in UMP binding. 2 residues coordinate ATP: Gly-55 and Arg-59. UMP-binding positions include Asp-74 and 135–142; that span reads TGNPFFTT. ATP is bound by residues Thr-162, Asn-163, Tyr-168, and Asp-171.

Belongs to the UMP kinase family. Homohexamer.

The protein resides in the cytoplasm. It carries out the reaction UMP + ATP = UDP + ADP. It participates in pyrimidine metabolism; CTP biosynthesis via de novo pathway; UDP from UMP (UMPK route): step 1/1. Its activity is regulated as follows. Inhibited by UTP. Functionally, catalyzes the reversible phosphorylation of UMP to UDP. The polypeptide is Uridylate kinase (Rhodopseudomonas palustris (strain BisA53)).